A 71-amino-acid polypeptide reads, in one-letter code: Conotoxin Pl071 (71 aa).

Positions 1–20 (MSRLFMILLVICVITLGTDA) are cleaved as a signal peptide. A propeptide spanning residues 21 to 31 (SQAEDSGTEKR) is cleaved from the precursor. The residue at position 69 (Tyr-69) is a Tyrosine amide.

It belongs to the conotoxin NSf-1 superfamily. As to expression, expressed by the venom duct.

Its subcellular location is the secreted. Probable neurotoxin with unknown target. Possibly targets ion channels. This Conus planorbis (Planorbis cone) protein is Conotoxin Pl071.